The primary structure comprises 73 residues: Translational regulator CsrA (73 aa).

The protein belongs to the CsrA/RsmA family. Homodimer; the beta-strands of each monomer intercalate to form a hydrophobic core, while the alpha-helices form wings that extend away from the core.

The protein resides in the cytoplasm. Functionally, a translational regulator that binds mRNA to regulate translation initiation and/or mRNA stability. Usually binds in the 5'-UTR at or near the Shine-Dalgarno sequence preventing ribosome-binding, thus repressing translation. Its main target seems to be the major flagellin gene, while its function is anatagonized by FliW. The chain is Translational regulator CsrA from Thermosipho africanus (strain TCF52B).